Consider the following 301-residue polypeptide: Thyroxine 5-deiodinase (301 aa).

The Cytoplasmic portion of the chain corresponds to 1–41 (MSRQAAPRWVVGEGRGTLGGAATMLRSLLLHSLRLCSQTAS). The chain crosses the membrane as a helical; Signal-anchor for type II membrane protein span at residues 42–64 (CLVLFPRFLGTAFMLWLLDFLCI). At 65–301 (RKHLLGRRRR…QLHGPQPRRV (237 aa)) the chain is on the extracellular side. Residue Sec167 is part of the active site. Sec167 is a non-standard amino acid (selenocysteine).

The protein belongs to the iodothyronine deiodinase family. In terms of assembly, monomer. Homodimer. May undergo minor heretodimerization with DIO1 and DIO2. Highly expressed in mammary gland. Detected at lower levels in kidney, and at very low levels in the other tissues.

It localises to the cell membrane. The protein resides in the endosome membrane. It catalyses the reaction 3,3',5'-triiodo-L-thyronine + iodide + A + H(+) = L-thyroxine + AH2. It carries out the reaction 3,3'-diiodo-L-thyronine + iodide + A + H(+) = 3,3',5-triiodo-L-thyronine + AH2. The enzyme catalyses 3-iodo-L-thyronine + iodide + A + H(+) = 3,5-diiodo-L-thyronine + AH2. The catalysed reaction is L-thyronine + iodide + A + H(+) = 3-iodo-L-thyronine + AH2. It catalyses the reaction 3',5'-diiodo-L-thyronine + iodide + A + H(+) = 3,3',5'-triiodo-L-thyronine + AH2. It carries out the reaction 3'-iodo-L-thyronine + iodide + A + H(+) = 3,3'-diiodo-L-thyronine + AH2. The enzyme catalyses 3,3',5'-triiodothyronamine + iodide + A + H(+) = 3,3',5,5'-tetraiodothyronamine + AH2. The catalysed reaction is 3',5'-diiodothyronamine + iodide + A + H(+) = 3,3',5'-triiodothyronamine + AH2. It catalyses the reaction 3,3'-diiodothyronamine + iodide + A + H(+) = 3,3',5-triiodothyronamine + AH2. It carries out the reaction 3-iodothyronamine + iodide + A + H(+) = 3,5-diiodothyronamine + AH2. The enzyme catalyses 3'-iodothyronamine + iodide + A + H(+) = 3,3'-diiodothyronamine + AH2. The catalysed reaction is thyronamine + iodide + A + H(+) = 3-iodothyronamine + AH2. Its function is as follows. Plays a crucial role in the metabolism of thyroid hormones (TH) and has specific roles in TH activation and inactivation by deiodination. Catalyzes the deiodination of L-thyroxine (T4) to 3,3',5'-triiodothyronine (rT3), 3,5,3'-triiodothyronine (T3) to 3,3'-diiodothyronine (3,3'-T2), 3,5-diiodothyronine (3,5-T2) to 3-monoiodothyronine (3-T1), rT3 to 3',5'-diiodothyronine (3',5'-T2) and 3,3'-T2 to 3'-monoiodothyronine (3'-T1) via inner-ring deiodination (IRD). Catalyzes the deiodination of 3-T1 to L-thyronine (T0) via outer-ring deiodination (ORD). Catalyzes the tyrosyl ring deiodinations of 3,3',5,5'-tetraiodothyronamine, 3,3',5'-triiodothyronamine, 3,5,3'-triiodothyronamine, 3,5-diiodothyronamine, 3,3'-diiodothyronamine and 3-iodothyronamine. The polypeptide is Thyroxine 5-deiodinase (DIO3) (Bos taurus (Bovine)).